Here is a 671-residue protein sequence, read N- to C-terminus: UvrABC system protein C (671 aa).

The 80-residue stretch at 16–95 folds into the GIY-YIG domain; that stretch reads TTPGVYRFRD…IKEFKPRFNV (80 aa). The 36-residue stretch at 207-242 folds into the UVR domain; that stretch reads KRFISRLEKDMAAAVAELDYERAAGLRDDIIALRKV.

This sequence belongs to the UvrC family. As to quaternary structure, interacts with UvrB in an incision complex.

It is found in the cytoplasm. In terms of biological role, the UvrABC repair system catalyzes the recognition and processing of DNA lesions. UvrC both incises the 5' and 3' sides of the lesion. The N-terminal half is responsible for the 3' incision and the C-terminal half is responsible for the 5' incision. The sequence is that of UvrABC system protein C from Paenarthrobacter aurescens (strain TC1).